A 230-amino-acid polypeptide reads, in one-letter code: Probable cytokinin riboside 5'-monophosphate phosphoribohydrolase LOG4 (230 aa).

Substrate-binding positions include glutamate 91, arginine 109–lysine 110, and glycine 126–glutamate 132.

This sequence belongs to the LOG family.

It carries out the reaction N(6)-(dimethylallyl)adenosine 5'-phosphate + H2O = N(6)-dimethylallyladenine + D-ribose 5-phosphate. The catalysed reaction is 9-ribosyl-trans-zeatin 5'-phosphate + H2O = trans-zeatin + D-ribose 5-phosphate. Cytokinin-activating enzyme working in the direct activation pathway. Phosphoribohydrolase that converts inactive cytokinin nucleotides to the biologically active free-base forms. The protein is Probable cytokinin riboside 5'-monophosphate phosphoribohydrolase LOG4 (LOGL4) of Oryza sativa subsp. japonica (Rice).